A 188-amino-acid chain; its full sequence is PRA1 family protein F3 (188 aa).

A run of 4 helical transmembrane segments spans residues 74-94 (IVVL…LIVF), 95-115 (TVLV…IKLF), 123-143 (TVLI…NATF), and 145-165 (IVGA…VRKT).

The protein belongs to the PRA1 family. In terms of assembly, interacts with PRA1F2 and PRA1D. Interacts with ACD11 and BPA1. In terms of tissue distribution, expressed in lateral roots, lateral root caps and columella cells.

The protein localises to the endoplasmic reticulum membrane. The protein resides in the membrane. It is found in the cytoplasm. May be involved in both secretory and endocytic intracellular trafficking in the endosomal/prevacuolar compartments. The polypeptide is PRA1 family protein F3 (Arabidopsis thaliana (Mouse-ear cress)).